The chain runs to 549 residues: Exodeoxyribonuclease 7 large subunit (549 aa).

The segment at 511–549 (LVATDPPVDPKPTRKPVQKSSSPKPSSRKPKKSQQEDLF) is disordered.

This sequence belongs to the XseA family. Heterooligomer composed of large and small subunits.

The protein resides in the cytoplasm. The enzyme catalyses Exonucleolytic cleavage in either 5'- to 3'- or 3'- to 5'-direction to yield nucleoside 5'-phosphates.. Bidirectionally degrades single-stranded DNA into large acid-insoluble oligonucleotides, which are then degraded further into small acid-soluble oligonucleotides. The protein is Exodeoxyribonuclease 7 large subunit of Beijerinckia indica subsp. indica (strain ATCC 9039 / DSM 1715 / NCIMB 8712).